The chain runs to 100 residues: uncharacterized protein (100 aa).

A run of 2 helical transmembrane segments spans residues 30 to 50 (FHIPDFLSFVFPFVASPPLAF) and 69 to 89 (FLLIVFLFFNLFPTFFFLPFF).

It is found in the cytoplasm. The protein resides in the nucleus membrane. This is an uncharacterized protein from Schizosaccharomyces pombe (strain 972 / ATCC 24843) (Fission yeast).